The chain runs to 728 residues: Catalase-peroxidase 1 (728 aa).

The segment at residues 91–218 is a cross-link (tryptophyl-tyrosyl-methioninium (Trp-Tyr) (with M-244)); it reads WHSAGTYRIA…LAAVQMGLIY (128 aa). The Proton acceptor role is filled by histidine 92. Positions 218–244 form a cross-link, tryptophyl-tyrosyl-methioninium (Tyr-Met) (with W-91); that stretch reads YVNPEGPDGNPDPVAAARDIRDTFARM. Residue histidine 259 participates in heme b binding.

The protein belongs to the peroxidase family. Peroxidase/catalase subfamily. As to quaternary structure, homodimer or homotetramer. Heme b is required as a cofactor. In terms of processing, formation of the three residue Trp-Tyr-Met cross-link is important for the catalase, but not the peroxidase activity of the enzyme.

The enzyme catalyses H2O2 + AH2 = A + 2 H2O. It catalyses the reaction 2 H2O2 = O2 + 2 H2O. Its function is as follows. Bifunctional enzyme with both catalase and broad-spectrum peroxidase activity. The chain is Catalase-peroxidase 1 from Burkholderia ambifaria (strain ATCC BAA-244 / DSM 16087 / CCUG 44356 / LMG 19182 / AMMD) (Burkholderia cepacia (strain AMMD)).